A 399-amino-acid polypeptide reads, in one-letter code: MHFIIGIVICLSLSVIQSNTSDEGMCMAKEQCTDPEESTTGRSLYSADYNKYFNAIETALAGYVACNSTNCNCHADVLKADLKPFKAHGITKEMINRAKQYGTHYQVIGHKLYRQRECMFPARCSGVEHFVRPLLPLLPDMDLIVNCRDWPQIHRHWSKEKIPVLSFSKTAEYLDIMYPAWAFWEGGPAIALYPTGLGRWDLHRQTITKASADWEAKEPKAFFRGSRTSDERDALVLLSRAQPSLVDAQYTKNQAWKSPQDTLNAEPAREVTLEEHCRYRFLFNFRGVAASFRFKHLFLCRSLVFHVGDEWQEFFYPSLKPWVHYVPVPVRSTPEELEALITFFQEHDQLARAIAERGYEHIWNHLRMADVECYWKKLLKRYGKLIRYTVERDSTLIEV.

Residues Met1–Ser18 form the signal peptide. 2 N-linked (GlcNAc...) asparagine glycosylation sites follow: Asn19 and Asn67. Disulfide bonds link Cys66/Cys73, Cys71/Cys373, Cys118/Cys124, and Cys277/Cys300. Residue Asp149 is the Proton donor/acceptor of the active site. Residues Ala189 to Pro194 form an interaction with the consensus sequence C-X-S-X-[PA]-C in peptide substrates region. UDP-alpha-D-glucose contacts are provided by residues Arg224–Thr228, Arg232, Val271–Leu273, and Ala289–Arg293.

Belongs to the glycosyltransferase 90 family.

Its subcellular location is the endoplasmic reticulum lumen. It localises to the secreted. The protein operates within protein modification; protein glycosylation. Its function is as follows. Protein O-glucosyltransferase. Catalyzes the reaction that attaches glucose through an O-glycosidic linkage to a conserved serine residue found in the consensus sequence C-X-S-X-[PA]-C in epidermal growth factor-like repeats. Regulates Notch signaling by glucosylating Notch in the ER, glucosylation is required for the correct folding and cleavage of Notch. The polypeptide is O-glucosyltransferase rumi homolog (Anopheles gambiae (African malaria mosquito)).